Here is a 252-residue protein sequence, read N- to C-terminus: Hydroxyacylglutathione hydrolase (252 aa).

Positions 52, 54, 56, 57, 107, 128, and 166 each coordinate Zn(2+).

Belongs to the metallo-beta-lactamase superfamily. Glyoxalase II family. In terms of assembly, monomer. The cofactor is Zn(2+).

It carries out the reaction an S-(2-hydroxyacyl)glutathione + H2O = a 2-hydroxy carboxylate + glutathione + H(+). It functions in the pathway secondary metabolite metabolism; methylglyoxal degradation; (R)-lactate from methylglyoxal: step 2/2. Thiolesterase that catalyzes the hydrolysis of S-D-lactoyl-glutathione to form glutathione and D-lactic acid. This Neisseria meningitidis serogroup C / serotype 2a (strain ATCC 700532 / DSM 15464 / FAM18) protein is Hydroxyacylglutathione hydrolase.